The sequence spans 492 residues: 5-taurinomethyluridine-[tRNA] synthase subunit GTPB3, mitochondrial (492 aa).

The N-terminal 20 residues, 1–20 (MWRGLSALVTQAAWAPLRLC), are a transit peptide targeting the mitochondrion. 5,10-methylenetetrahydrofolate-binding residues include R52, E112, and K152. Residues 249–416 (GANVVVTGPP…LLQALKTELA (168 aa)) form the TrmE-type G domain. GTP contacts are provided by residues 256 to 263 (GPPNAGKS), 282 to 286 (GTTRD), 303 to 306 (DTAG), and 374 to 377 (NKSD). Residue N259 participates in K(+) binding. The Mg(2+) site is built by S263 and T284. 5,10-methylenetetrahydrofolate is bound at residue K492.

Belongs to the TRAFAC class TrmE-Era-EngA-EngB-Septin-like GTPase superfamily. TrmE GTPase family. In terms of assembly, homodimer; forms a dimer in the presence of potassium. Interacts with MTO1; forms the GTPBP3-MTO1 complex composed of homodimers of GTPBP3 and MTO1. K(+) is required as a cofactor. As to expression, ubiquitously expressed. Highly expressed in tissues with high metabolic rates including heart, liver and brain. Weakly expressed in skeletal muscle.

It localises to the mitochondrion. It catalyses the reaction GTP + H2O = GDP + phosphate + H(+). Functionally, GTPase component of the GTPBP3-MTO1 complex that catalyzes the 5-taurinomethyluridine (taum(5)U) modification at the 34th wobble position (U34) of mitochondrial tRNAs (mt-tRNAs), which plays a role in mt-tRNA decoding and mitochondrial translation. Taum(5)U formation on mammalian mt-tRNA requires the presence of both GTPBP3-mediated GTPase activity and MTO1 catalytic activity. The sequence is that of 5-taurinomethyluridine-[tRNA] synthase subunit GTPB3, mitochondrial from Mus musculus (Mouse).